Consider the following 1170-residue polypeptide: MLMSLTDSKEGKNRSGVRMFKDDDFLIPASGESWDRLRLTCSQPFTRHQSFGLAFLRVRSSLDSLSDPVKDPSSPGSSGLNQNSSDKLESDPSPWLTNPSIRRTFFPDPQTSTKEISALKGMLKQLQPGPLGRAARMVLSAAHKAPPASVVSPNNSHGEPDSSHPERAEPRAEEPNRKNNASRGKRRKVQEQRRPLSSSSSQPNRRATGRTKQRQQRPQAKSDGSGVQATGQCPICTGSFSIEALPRHAATCGESSPPQPASPTSLSSSESVLRCLHVALTPVPLIPKPNWTEIVNKKLKFPPTLLRAIQEGQLGLVQQLLESGSDPSGAGPGGPLRNVEESEDRSWREALNLAIRLGHEVITDVLLANVKFDFRQIHEALLVAVDTNQPAVVRRLLARLEREKGRKVDTKSFSLAFFDSSIDGSRFAPGVTPLTLACQKDLYEIAQLLMDQGHTIARPHPVSCACLECSNARRYDLLKFSLSRINTYRGIASRAHLSLASEDAMLAAFQLSRELRRLARKEPEFKPQYIALESLCQDYGFELLGMCRNQSEVTAVLNDLGEDSETEPEAEGLGQAFEEGIPNLARLRLAVNYNQKQFVAHPICQQVLSSIWCGNLAGWRGSTTIWKLFVAFLIFLTMPFLCIGYWLAPKSRLGRLLKIPVLKFLLHSASYLWFLIFLLGESLVMETQLSTFKGRSQSVWETSLHMIWVTGFLWFECKEVWIEGLRSYLLDWWNFLDVVILSLYLASFALRLLLAGLAYMHCRDASDSSTCRYFTTAERSEWRTEDPQFLAEVLFAVTSMLSFTRLAYILPAHESLGTLQISIGKMIDDMIRFMFILMIILTAFLCGLNNIYVPYQETEKLGNFNETFQFLFWTMFGMEEHSVVDMPQFLVPEFVGRAMYGIFTIVMVIVLLNMLIAMITNSFQKIEDDADVEWKFARSKLYLSYFREGLTLPVPFNILPSPKAAFYLLRRIFRFICCGSSCCKAKKSDYPPIPTFTNPGARAGPGEGEHVSYRLRVIKALVQRYIETARREFEETRRKDLGNRLTELTKTVSRLQSEVASVQKTVAAGGALRPPDGASILSRYITRVRNSFQNLGPPAPDTPAELTMPGIVETEVSLEDSLDATGEAGTPASGESSSSSSAHVLVHREQEAEGAGDLPLGEDLETKGES.

At M1–K627 the chain is on the cytoplasmic side. 3 disordered regions span residues S64–T113, A142–G231, and E322–S342. The segment covering S74 to S85 has biased composition (polar residues). The segment covering G158–R177 has biased composition (basic and acidic residues). ANK repeat units lie at residues K300 to G329, S346 to Q376, I377 to G405, and P429 to R458. The chain crosses the membrane as a helical span at residues L628 to A648. Topologically, residues P649 to K658 are extracellular. Residues I659–L679 traverse the membrane as a helical segment. The Cytoplasmic segment spans residues G680 to E701. A helical transmembrane segment spans residues T702–I722. Residues E723–D737 are Extracellular-facing. A helical transmembrane segment spans residues V738 to A758. The Cytoplasmic portion of the chain corresponds to Y759–Q788. Residues F789–I809 traverse the membrane as a helical segment. The Extracellular portion of the chain corresponds to L810 to R832. Residues F833–V853 form a helical membrane-spanning segment. Residues P854–A898 are Cytoplasmic-facing. The helical transmembrane segment at M899 to I919 threads the bilayer. The Extracellular portion of the chain corresponds to T920–S1170. Residues R1030 to A1068 are a coiled coil. The tract at residues L1118–S1170 is disordered.

This sequence belongs to the transient receptor (TC 1.A.4) family. STrpC subfamily. TRPC2 sub-subfamily. As to expression, expressed exclusively in vomeronasal organ neurons (sensory microvilli).

It is found in the membrane. In terms of biological role, thought to form a receptor-activated calcium permeant cation channel. Probably is operated by a phosphatidylinositol second messenger system activated by receptor tyrosine kinases or G-protein coupled receptors. Is not activated by intracellular calcium store depletion. The sequence is that of Short transient receptor potential channel 2 (Trpc2) from Rattus norvegicus (Rat).